The sequence spans 514 residues: 3-octaprenyl-4-hydroxybenzoate carboxy-lyase (514 aa).

N177 lines the Mn(2+) pocket. Prenylated FMN is bound by residues I180–R182, R194–L196, and R199–G200. E243 is a Mn(2+) binding site. The Proton donor role is filled by D314.

Belongs to the UbiD family. Homohexamer. The cofactor is prenylated FMN. It depends on Mn(2+) as a cofactor.

It localises to the cell membrane. It carries out the reaction a 4-hydroxy-3-(all-trans-polyprenyl)benzoate + H(+) = a 2-(all-trans-polyprenyl)phenol + CO2. It participates in cofactor biosynthesis; ubiquinone biosynthesis. In terms of biological role, catalyzes the decarboxylation of 3-octaprenyl-4-hydroxy benzoate to 2-octaprenylphenol, an intermediate step in ubiquinone biosynthesis. The protein is 3-octaprenyl-4-hydroxybenzoate carboxy-lyase of Bordetella parapertussis (strain 12822 / ATCC BAA-587 / NCTC 13253).